We begin with the raw amino-acid sequence, 292 residues long: Acetylglutamate kinase (292 aa).

Residues 60–61, Arg82, and Asn187 contribute to the substrate site; that span reads GG.

It belongs to the acetylglutamate kinase family. ArgB subfamily.

The protein localises to the cytoplasm. It catalyses the reaction N-acetyl-L-glutamate + ATP = N-acetyl-L-glutamyl 5-phosphate + ADP. The protein operates within amino-acid biosynthesis; L-arginine biosynthesis; N(2)-acetyl-L-ornithine from L-glutamate: step 2/4. Catalyzes the ATP-dependent phosphorylation of N-acetyl-L-glutamate. This is Acetylglutamate kinase from Methanobrevibacter smithii (strain ATCC 35061 / DSM 861 / OCM 144 / PS).